The following is a 153-amino-acid chain: Aspartate carbamoyltransferase regulatory chain (153 aa).

Residues C109, C114, C138, and C141 each contribute to the Zn(2+) site.

It belongs to the PyrI family. As to quaternary structure, contains catalytic and regulatory chains. The cofactor is Zn(2+).

Functionally, involved in allosteric regulation of aspartate carbamoyltransferase. This chain is Aspartate carbamoyltransferase regulatory chain, found in Cenarchaeum symbiosum (strain A).